Consider the following 181-residue polypeptide: Methanesulfonate monooxygenase hydroxylase subunit beta (181 aa).

This sequence belongs to the bacterial ring-hydroxylating dioxygenase beta subunit family. In terms of assembly, the MSA monooxygenase system consists of 4 proteins: the 2 subunits of the hydroxylase component (MsmA and MsmB), a ferredoxin (MsmC) and a ferredoxin reductase (MsmD). The hydroxylase component consists of a 3 alpha (MsmA) and 3 beta (MsmB) subunits.

Its subcellular location is the cytoplasm. It carries out the reaction methanesulfonate + NADH + O2 = sulfite + formaldehyde + NAD(+) + H2O. Its activity is regulated as follows. MSAMO is inhibited by metal chelators (such as bathophenanthroline, bathocuprione, neocuprione, alpha-alpha-dipyridil and sodium EDTA) and by sodium azide, sodium arsenate and potassium cyanide. Functionally, methanesulfonate monooxygenase (MSAMO) mediates the primary degradation of methanesulfonic acid (MSA) to produce formaldehyd and inorganic sulfite by initial hydroxylation of the carbon atom prior to spontaneous cleavage of the unstable hydroxymethanesulfonic acid. MSAMO has a restricted substrate range that includes only the short-chain aliphatic sulfonates (methane- to butanesulfonate) and excludes all larger molecules, such as arylsulfonates and aromatic sulfonates. All MSAMO components are required for enzyme activity. This Methylosulfonomonas methylovora protein is Methanesulfonate monooxygenase hydroxylase subunit beta.